The sequence spans 218 residues: 4-coumaroyl-homoserine lactone synthase (218 aa).

Belongs to the autoinducer synthase family.

It catalyses the reaction 4-coumaroyl-CoA + S-adenosyl-L-methionine = N-(4-coumaroyl)-L-homoserine lactone + S-methyl-5'-thioadenosine + CoA + H(+). In terms of biological role, catalyzes the synthesis of 4-coumaroyl-homoserine lactone, a quorum-sensing (QS) autoinducer molecule which binds to RpaR transcriptional regulator to regulate expression of QS-dependent genes. This Rhodopseudomonas palustris (strain ATCC BAA-98 / CGA009) protein is 4-coumaroyl-homoserine lactone synthase.